The primary structure comprises 367 residues: Ferrochelatase (367 aa).

Histidine 226 and glutamate 307 together coordinate Fe cation.

The protein belongs to the ferrochelatase family.

It is found in the cytoplasm. It catalyses the reaction heme b + 2 H(+) = protoporphyrin IX + Fe(2+). It participates in porphyrin-containing compound metabolism; protoheme biosynthesis; protoheme from protoporphyrin-IX: step 1/1. In terms of biological role, catalyzes the ferrous insertion into protoporphyrin IX. In Burkholderia pseudomallei (strain 668), this protein is Ferrochelatase.